Here is a 419-residue protein sequence, read N- to C-terminus: Histidine--tRNA ligase (419 aa).

The protein belongs to the class-II aminoacyl-tRNA synthetase family. In terms of assembly, homodimer.

It is found in the cytoplasm. The enzyme catalyses tRNA(His) + L-histidine + ATP = L-histidyl-tRNA(His) + AMP + diphosphate + H(+). The polypeptide is Histidine--tRNA ligase (Methylobacillus flagellatus (strain ATCC 51484 / DSM 6875 / VKM B-1610 / KT)).